Here is a 202-residue protein sequence, read N- to C-terminus: Xanthine phosphoribosyltransferase (202 aa).

Xanthine is bound by residues leucine 20 and asparagine 27. 128-132 serves as a coordination point for 5-phospho-alpha-D-ribose 1-diphosphate; it reads ANGEA. Lysine 156 is a xanthine binding site.

Belongs to the purine/pyrimidine phosphoribosyltransferase family. Xpt subfamily. As to quaternary structure, homodimer.

It localises to the cytoplasm. The catalysed reaction is XMP + diphosphate = xanthine + 5-phospho-alpha-D-ribose 1-diphosphate. It participates in purine metabolism; XMP biosynthesis via salvage pathway; XMP from xanthine: step 1/1. Converts the preformed base xanthine, a product of nucleic acid breakdown, to xanthosine 5'-monophosphate (XMP), so it can be reused for RNA or DNA synthesis. This is Xanthine phosphoribosyltransferase from Alkaliphilus metalliredigens (strain QYMF).